The sequence spans 301 residues: Acetylglutamate kinase (301 aa).

Substrate-binding positions include 68–69 (GG), R90, and N195.

Belongs to the acetylglutamate kinase family. ArgB subfamily.

The protein localises to the cytoplasm. The enzyme catalyses N-acetyl-L-glutamate + ATP = N-acetyl-L-glutamyl 5-phosphate + ADP. It participates in amino-acid biosynthesis; L-arginine biosynthesis; N(2)-acetyl-L-ornithine from L-glutamate: step 2/4. Its function is as follows. Catalyzes the ATP-dependent phosphorylation of N-acetyl-L-glutamate. This Pseudomonas entomophila (strain L48) protein is Acetylglutamate kinase.